The following is a 510-amino-acid chain: Mitochondrial metal transporter 1 (510 aa).

The segment at A120 to H141 is disordered. Basic residues predominate over residues S130–H141. The next 6 membrane-spanning stretches (helical) occupy residues W165–F185, A194–A214, L241–I261, V286–F306, L333–L353, and I356–A376.

The protein belongs to the cation diffusion facilitator (CDF) transporter (TC 2.A.4) family. SLC30A subfamily.

It is found in the mitochondrion membrane. Its function is as follows. Mitochondrial metal transporter involved in mitochondrial iron accumulation. This chain is Mitochondrial metal transporter 1 (MMT1), found in Saccharomyces cerevisiae (strain ATCC 204508 / S288c) (Baker's yeast).